We begin with the raw amino-acid sequence, 379 residues long: tRNA-specific 2-thiouridylase MnmA (379 aa).

ATP contacts are provided by residues 23–30 (AMSGGVDS) and L49. Residue C117 is the Nucleophile of the active site. Cysteines 117 and 214 form a disulfide. G141 is an ATP binding site. The interval 163-165 (RDQ) is interaction with tRNA. C214 functions as the Cysteine persulfide intermediate in the catalytic mechanism.

It belongs to the MnmA/TRMU family.

It localises to the cytoplasm. The enzyme catalyses S-sulfanyl-L-cysteinyl-[protein] + uridine(34) in tRNA + AH2 + ATP = 2-thiouridine(34) in tRNA + L-cysteinyl-[protein] + A + AMP + diphosphate + H(+). Its function is as follows. Catalyzes the 2-thiolation of uridine at the wobble position (U34) of tRNA, leading to the formation of s(2)U34. The protein is tRNA-specific 2-thiouridylase MnmA of Cereibacter sphaeroides (strain ATCC 17029 / ATH 2.4.9) (Rhodobacter sphaeroides).